A 265-amino-acid chain; its full sequence is Ribosomal RNA small subunit methyltransferase A (265 aa).

S-adenosyl-L-methionine contacts are provided by H11, L13, G38, E59, D83, and N100.

This sequence belongs to the class I-like SAM-binding methyltransferase superfamily. rRNA adenine N(6)-methyltransferase family. RsmA subfamily.

Its subcellular location is the cytoplasm. It catalyses the reaction adenosine(1518)/adenosine(1519) in 16S rRNA + 4 S-adenosyl-L-methionine = N(6)-dimethyladenosine(1518)/N(6)-dimethyladenosine(1519) in 16S rRNA + 4 S-adenosyl-L-homocysteine + 4 H(+). Functionally, specifically dimethylates two adjacent adenosines (A1518 and A1519) in the loop of a conserved hairpin near the 3'-end of 16S rRNA in the 30S particle. May play a critical role in biogenesis of 30S subunits. In Thermosynechococcus vestitus (strain NIES-2133 / IAM M-273 / BP-1), this protein is Ribosomal RNA small subunit methyltransferase A.